Reading from the N-terminus, the 731-residue chain is Probable G-protein coupled receptor 149 (731 aa).

The Extracellular segment spans residues 1-35 (MSLFLSNLSTNDSSLWKENHNSTDLLNPPGTLNIY). Residues N7, N11, and N21 are each glycosylated (N-linked (GlcNAc...) asparagine). A helical membrane pass occupies residues 36-56 (LFCLTCLMTFAALVGSIYSLI). Over 57 to 69 (SLLKMQNRTVVSM) the chain is Cytoplasmic. Residues 70–90 (LVASWSVDDLMSVLSVTIFMF) form a helical membrane-spanning segment. The Extracellular segment spans residues 91–109 (LQWPNEVPGYFQFLCTTSA). A disulfide bridge links C105 with C182. The helical transmembrane segment at 110 to 132 (LMYLCQGLSSNLKATLLVSYNFY) threads the bilayer. Residues 133 to 155 (TMHRGVGSQTASRRSGQVLGVVL) lie on the Cytoplasmic side of the membrane. A helical transmembrane segment spans residues 156-176 (TVWAASLLLSALPLCGWGAFV). Residues 177 to 189 (RTPWGCLVDCSSS) are Extracellular-facing. The helical transmembrane segment at 190-210 (YVLFLSIVYALAFGLLVGLSV) threads the bilayer. Topologically, residues 211 to 310 (PLTHRLLCSE…SFTVSVAQKR (100 aa)) are cytoplasmic. Residues 234–271 (RGASIPGTPPTAGRVVSLSPEDAPGPSLRRSGGCSPSS) form a disordered region. The helical transmembrane segment at 311-331 (FALILALTKVVLWLPMMMHMV) threads the bilayer. The Extracellular portion of the chain corresponds to 332 to 342 (VQNVVGFQSLP). A helical transmembrane segment spans residues 343–363 (LETFSFLLTLLATTVTPVFVL). The Cytoplasmic portion of the chain corresponds to 364-731 (SKRWTHLPCG…RKREEESKGS (368 aa)). The interval 475–526 (NTDITEAKQDSNNKKDAFSDKTGGDINYEETTFSEGPERRLSHEESQKPDLS) is disordered. 2 stretches are compositionally biased toward basic and acidic residues: residues 479 to 497 (TEAKQDSNNKKDAFSDKTG) and 510 to 526 (GPERRLSHEESQKPDLS).

The protein belongs to the G-protein coupled receptor 1 family.

It is found in the cell membrane. Its function is as follows. Orphan receptor. The sequence is that of Probable G-protein coupled receptor 149 (GPR149) from Homo sapiens (Human).